A 1027-amino-acid polypeptide reads, in one-letter code: Presequence protease, mitochondrial (1027 aa).

The N-terminal 22 residues, 1–22 (MIRQCRAGLRLCRALYQTSYRW), are a transit peptide targeting the mitochondrion. A Zn(2+)-binding site is contributed by histidine 98. Glutamate 101 serves as the catalytic Proton acceptor. Histidine 102 and glutamate 199 together coordinate Zn(2+). Cysteine 113 and cysteine 550 are oxidised to a cystine. The tract at residues 800–829 (KKERKSIRPHVVEKSSSPSSSGSEISRRAT) is disordered. Positions 814–823 (SSSPSSSGSE) are enriched in low complexity.

The protein belongs to the peptidase M16 family. PreP subfamily. In terms of assembly, monomer and homodimer; homodimerization is induced by binding of the substrate. The cofactor is Zn(2+). Post-translationally, a disulfide bond locks the enzyme in the closed conformation preventing substrate entry into the catalytic chamber.

It localises to the mitochondrion matrix. Its activity is regulated as follows. Mainly exists in a closed and catalytically competent conformation but a closed-to-open switch allows substrate entry into the catalytic chamber. Substrate binding induces closure and dimerization. A disulfide bond may lock the enzyme in a closed conformation preventing substrate entry into the catalytic chamber, participating in redox regulation of the enzyme. Inhibited by metal-chelating agents. Inhibited by nickel and zinc excess, and slightly activated by manganese. Functionally, metalloendopeptidase of the mitochondrial matrix that functions in peptide cleavage and degradation rather than in protein processing. Has an ATP-independent activity. Specifically cleaves peptides in the range of 5 to 65 residues. Shows a preference for cleavage after small polar residues and before basic residues, but without any positional preference. Degrades the transit peptides of mitochondrial proteins after their cleavage. Also degrades other unstructured peptides. This is Presequence protease, mitochondrial (pitrm1) from Xenopus tropicalis (Western clawed frog).